We begin with the raw amino-acid sequence, 367 residues long: Zorya protein ZorE (367 aa).

Component of antiviral defense system Zorya type II, composed of ZorA, ZorB and ZorE. Expression of Zorya type II in E.coli (strain MG1655) confers resistance to phages SECphi7 and T7. While most T7 infected Zorya-containing cells undergo abortive infection, a minority produce viable phage progeny. These eventually accumulate to a high multiplicity of infection, leading to culture collapse by 170 minutes after initial infection. ZorA and ZorB probably assemble in the cell inner membrane and exert their effect there. This may be a nuclease. The sequence is that of Zorya protein ZorE from Escherichia coli (strain ATCC 8739 / DSM 1576 / NBRC 3972 / NCIMB 8545 / WDCM 00012 / Crooks).